We begin with the raw amino-acid sequence, 106 residues long: Small ribosomal subunit protein uS10 (106 aa).

Belongs to the universal ribosomal protein uS10 family. In terms of assembly, part of the 30S ribosomal subunit.

Its function is as follows. Involved in the binding of tRNA to the ribosomes. This is Small ribosomal subunit protein uS10 from Pyrobaculum arsenaticum (strain DSM 13514 / JCM 11321 / PZ6).